Consider the following 688-residue polypeptide: Glycine--tRNA ligase beta subunit (688 aa).

This sequence belongs to the class-II aminoacyl-tRNA synthetase family. As to quaternary structure, tetramer of two alpha and two beta subunits.

Its subcellular location is the cytoplasm. The catalysed reaction is tRNA(Gly) + glycine + ATP = glycyl-tRNA(Gly) + AMP + diphosphate. The protein is Glycine--tRNA ligase beta subunit of Shewanella sp. (strain MR-7).